Reading from the N-terminus, the 673-residue chain is DNA ligase (673 aa).

NAD(+) is bound by residues 32-36, 81-82, and E113; these read DAEYD and SL. Residue K115 is the N6-AMP-lysine intermediate of the active site. NAD(+)-binding residues include R136, E173, K290, and K314. Zn(2+)-binding residues include C408, C411, C426, and C432. Residues 595-673 form the BRCT domain; sequence EIDSPFAGKT…EAEMIRLLGA (79 aa).

This sequence belongs to the NAD-dependent DNA ligase family. LigA subfamily. Mg(2+) is required as a cofactor. It depends on Mn(2+) as a cofactor.

It catalyses the reaction NAD(+) + (deoxyribonucleotide)n-3'-hydroxyl + 5'-phospho-(deoxyribonucleotide)m = (deoxyribonucleotide)n+m + AMP + beta-nicotinamide D-nucleotide.. In terms of biological role, DNA ligase that catalyzes the formation of phosphodiester linkages between 5'-phosphoryl and 3'-hydroxyl groups in double-stranded DNA using NAD as a coenzyme and as the energy source for the reaction. It is essential for DNA replication and repair of damaged DNA. This chain is DNA ligase, found in Serratia proteamaculans (strain 568).